We begin with the raw amino-acid sequence, 232 residues long: Ubiquinone biosynthesis O-methyltransferase (232 aa).

Residues Arg-36, Gly-55, Asp-76, and Leu-120 each contribute to the S-adenosyl-L-methionine site.

This sequence belongs to the methyltransferase superfamily. UbiG/COQ3 family.

It catalyses the reaction a 3-demethylubiquinol + S-adenosyl-L-methionine = a ubiquinol + S-adenosyl-L-homocysteine + H(+). It carries out the reaction a 3-(all-trans-polyprenyl)benzene-1,2-diol + S-adenosyl-L-methionine = a 2-methoxy-6-(all-trans-polyprenyl)phenol + S-adenosyl-L-homocysteine + H(+). It functions in the pathway cofactor biosynthesis; ubiquinone biosynthesis. O-methyltransferase that catalyzes the 2 O-methylation steps in the ubiquinone biosynthetic pathway. The sequence is that of Ubiquinone biosynthesis O-methyltransferase from Pseudomonas fluorescens (strain Pf0-1).